The chain runs to 159 residues: Regulatory protein RecX (159 aa).

It belongs to the RecX family.

It is found in the cytoplasm. Modulates RecA activity. The sequence is that of Regulatory protein RecX from Ralstonia pickettii (strain 12J).